Consider the following 196-residue polypeptide: Pyridoxal 5'-phosphate synthase subunit PdxT (196 aa).

52-54 (GES) contributes to the L-glutamine binding site. Cys-84 acts as the Nucleophile in catalysis. L-glutamine-binding positions include Arg-113 and 141-142 (IR). Active-site charge relay system residues include His-178 and Glu-180.

This sequence belongs to the glutaminase PdxT/SNO family. As to quaternary structure, in the presence of PdxS, forms a dodecamer of heterodimers. Only shows activity in the heterodimer.

The enzyme catalyses aldehydo-D-ribose 5-phosphate + D-glyceraldehyde 3-phosphate + L-glutamine = pyridoxal 5'-phosphate + L-glutamate + phosphate + 3 H2O + H(+). It catalyses the reaction L-glutamine + H2O = L-glutamate + NH4(+). The protein operates within cofactor biosynthesis; pyridoxal 5'-phosphate biosynthesis. Functionally, catalyzes the hydrolysis of glutamine to glutamate and ammonia as part of the biosynthesis of pyridoxal 5'-phosphate. The resulting ammonia molecule is channeled to the active site of PdxS. The sequence is that of Pyridoxal 5'-phosphate synthase subunit PdxT from Pyrococcus horikoshii (strain ATCC 700860 / DSM 12428 / JCM 9974 / NBRC 100139 / OT-3).